Reading from the N-terminus, the 209-residue chain is Ribosomal RNA large subunit methyltransferase E (209 aa).

S-adenosyl-L-methionine-binding residues include G60, W62, D80, D96, and D121. The active-site Proton acceptor is the K161. Positions 182-196 are enriched in basic and acidic residues; it reads VQMRKPSSSRDRSRE. Residues 182 to 209 are disordered; sequence VQMRKPSSSRDRSREQYLLGRGFRGRSE.

Belongs to the class I-like SAM-binding methyltransferase superfamily. RNA methyltransferase RlmE family.

The protein resides in the cytoplasm. It carries out the reaction uridine(2552) in 23S rRNA + S-adenosyl-L-methionine = 2'-O-methyluridine(2552) in 23S rRNA + S-adenosyl-L-homocysteine + H(+). Specifically methylates the uridine in position 2552 of 23S rRNA at the 2'-O position of the ribose in the fully assembled 50S ribosomal subunit. This is Ribosomal RNA large subunit methyltransferase E from Pseudomonas fluorescens (strain ATCC BAA-477 / NRRL B-23932 / Pf-5).